The chain runs to 551 residues: Palmdelphin (551 aa).

Met1 is modified (N-acetylmethionine). The stretch at Glu2–Ile106 forms a coiled coil. Lys125 is covalently cross-linked (Glycyl lysine isopeptide (Lys-Gly) (interchain with G-Cter in SUMO2)). Position 135 is a phosphoserine (Ser135). A Glycyl lysine isopeptide (Lys-Gly) (interchain with G-Cter in SUMO1); alternate cross-link involves residue Lys179. Residue Lys179 forms a Glycyl lysine isopeptide (Lys-Gly) (interchain with G-Cter in SUMO2); alternate linkage. The span at Ser247–Asp259 shows a compositional bias: basic and acidic residues. 2 disordered regions span residues Ser247–Glu393 and Glu450–Asp529. Thr271 is modified (phosphothreonine). Phosphoserine is present on residues Ser321, Ser370, Ser384, and Ser385. A compositionally biased stretch (basic and acidic residues) spans Lys484–Asn495. Phosphoserine occurs at positions 498, 515, and 520.

Belongs to the paralemmin family. Interacts with GLUL. Cell projection, dendrite. Cell projection, dendritic spine. Phosphorylated.

It localises to the cytoplasm. The protein localises to the cell projection. The protein resides in the dendrite. Its subcellular location is the dendritic spine. This Sus scrofa (Pig) protein is Palmdelphin (PALMD).